A 209-amino-acid polypeptide reads, in one-letter code: Protein-L-isoaspartate O-methyltransferase (209 aa).

Residue Ser-55 is part of the active site.

This sequence belongs to the methyltransferase superfamily. L-isoaspartyl/D-aspartyl protein methyltransferase family.

It localises to the cytoplasm. It carries out the reaction [protein]-L-isoaspartate + S-adenosyl-L-methionine = [protein]-L-isoaspartate alpha-methyl ester + S-adenosyl-L-homocysteine. Its function is as follows. Catalyzes the methyl esterification of L-isoaspartyl residues in peptides and proteins that result from spontaneous decomposition of normal L-aspartyl and L-asparaginyl residues. It plays a role in the repair and/or degradation of damaged proteins. The sequence is that of Protein-L-isoaspartate O-methyltransferase from Anaeromyxobacter dehalogenans (strain 2CP-C).